The following is a 314-amino-acid chain: Aryldialkylphosphatase (314 aa).

Fe cation-binding residues include histidine 22, histidine 24, and lysine 137. Co(2+) is bound by residues lysine 137, histidine 170, and histidine 199. At lysine 137 the chain carries N6-carboxylysine. Aspartate 256 contacts Fe cation.

This sequence belongs to the metallo-dependent hydrolases superfamily. Phosphotriesterase family. As to quaternary structure, homodimer. Co(2+) is required as a cofactor. It depends on Fe cation as a cofactor.

It carries out the reaction An aryl dialkyl phosphate + H2O = dialkyl phosphate + an aryl alcohol.. Inactivated by EDTA and o-phenanthroline. In terms of biological role, has a low paraoxonase activity. Also active, but with a lower activity, against other organo-phosphorus insecticides such as Dursban, Coumaphos, pNP-butanoate or parathion. This Saccharolobus solfataricus (strain ATCC 35092 / DSM 1617 / JCM 11322 / P2) (Sulfolobus solfataricus) protein is Aryldialkylphosphatase (php).